The chain runs to 273 residues: Tyrosinase (273 aa).

6 residues coordinate Cu cation: histidine 38, histidine 54, histidine 63, histidine 190, histidine 194, and histidine 216.

Belongs to the tyrosinase family. Requires Cu(2+) as cofactor.

The catalysed reaction is 2 L-dopa + O2 = 2 L-dopaquinone + 2 H2O. It carries out the reaction L-tyrosine + O2 = L-dopaquinone + H2O. In terms of biological role, this is a copper-containing oxidase that functions in the formation of pigments such as melanins and other polyphenolic compounds. The chain is Tyrosinase (melC2) from Streptomyces antibioticus.